Here is a 94-residue protein sequence, read N- to C-terminus: MPRLLRYGSFSVVASVLGASYYYYAVASPLYTEAEWHRVSQRTAALIDRRIDIPVPESTTERREYVVRSSKETMKDIWNEQIRSIVDWIYSWSH.

The chain crosses the membrane as a helical span at residues 7–23 (YGSFSVVASVLGASYYY).

The protein belongs to the MICOS complex subunit Mic12 family. In terms of assembly, component of the mitochondrial contact site and cristae organizing system (MICOS) complex.

Its subcellular location is the mitochondrion inner membrane. Component of the MICOS complex, a large protein complex of the mitochondrial inner membrane that plays crucial roles in the maintenance of crista junctions, inner membrane architecture, and formation of contact sites to the outer membrane. This chain is MICOS complex subunit MIC12 (AIM5), found in Eremothecium gossypii (strain ATCC 10895 / CBS 109.51 / FGSC 9923 / NRRL Y-1056) (Yeast).